Consider the following 318-residue polypeptide: Acetyl-coenzyme A carboxylase carboxyl transferase subunit alpha (318 aa).

A CoA carboxyltransferase C-terminal domain is found at 34–295 (SIEEEITKLR…KATIKQQLAQ (262 aa)).

Belongs to the AccA family. In terms of assembly, acetyl-CoA carboxylase is a heterohexamer composed of biotin carboxyl carrier protein (AccB), biotin carboxylase (AccC) and two subunits each of ACCase subunit alpha (AccA) and ACCase subunit beta (AccD).

Its subcellular location is the cytoplasm. The catalysed reaction is N(6)-carboxybiotinyl-L-lysyl-[protein] + acetyl-CoA = N(6)-biotinyl-L-lysyl-[protein] + malonyl-CoA. The protein operates within lipid metabolism; malonyl-CoA biosynthesis; malonyl-CoA from acetyl-CoA: step 1/1. Functionally, component of the acetyl coenzyme A carboxylase (ACC) complex. First, biotin carboxylase catalyzes the carboxylation of biotin on its carrier protein (BCCP) and then the CO(2) group is transferred by the carboxyltransferase to acetyl-CoA to form malonyl-CoA. The protein is Acetyl-coenzyme A carboxylase carboxyl transferase subunit alpha of Pseudoalteromonas atlantica (strain T6c / ATCC BAA-1087).